Reading from the N-terminus, the 410-residue chain is Histidine--tRNA ligase (410 aa).

Belongs to the class-II aminoacyl-tRNA synthetase family. Homodimer.

The protein resides in the cytoplasm. The enzyme catalyses tRNA(His) + L-histidine + ATP = L-histidyl-tRNA(His) + AMP + diphosphate + H(+). The protein is Histidine--tRNA ligase of Elusimicrobium minutum (strain Pei191).